Reading from the N-terminus, the 454-residue chain is Cobyrinate a,c-diamide synthase (454 aa).

A GATase cobBQ-type domain is found at 247–442 (KIGIAMDSAF…IHAHWASNPN (196 aa)). C329 (nucleophile) is an active-site residue.

This sequence belongs to the CobB/CbiA family. Requires Mg(2+) as cofactor.

The catalysed reaction is cob(II)yrinate + 2 L-glutamine + 2 ATP + 2 H2O = cob(II)yrinate a,c diamide + 2 L-glutamate + 2 ADP + 2 phosphate + 2 H(+). Its pathway is cofactor biosynthesis; adenosylcobalamin biosynthesis; cob(II)yrinate a,c-diamide from sirohydrochlorin (anaerobic route): step 10/10. Its function is as follows. Catalyzes the ATP-dependent amidation of the two carboxylate groups at positions a and c of cobyrinate, using either L-glutamine or ammonia as the nitrogen source. This is Cobyrinate a,c-diamide synthase from Leptospira interrogans serogroup Icterohaemorrhagiae serovar copenhageni (strain Fiocruz L1-130).